Consider the following 134-residue polypeptide: Small ribosomal subunit protein uS11 (134 aa).

Positions 115 to 134 (VTPIPTDSTRRKGGRRGRRL) are disordered. Over residues 125 to 134 (RKGGRRGRRL) the composition is skewed to basic residues.

It belongs to the universal ribosomal protein uS11 family.

This chain is Small ribosomal subunit protein uS11 (RPS14), found in Syntrichia ruralis (Great hairy screw-moss).